A 133-amino-acid chain; its full sequence is Large ribosomal subunit protein bL17 (133 aa).

Belongs to the bacterial ribosomal protein bL17 family. Part of the 50S ribosomal subunit. Contacts protein L32.

This chain is Large ribosomal subunit protein bL17, found in Verminephrobacter eiseniae (strain EF01-2).